Here is a 445-residue protein sequence, read N- to C-terminus: Putative MgpC-like protein MPN_464 (445 aa).

Residues 23–44 (STTVAVQKSDSSGSQGQGTTDN) are disordered. The segment covering 31–43 (SDSSGSQGQGTTD) has biased composition (low complexity).

This sequence belongs to the MgpC family.

This chain is Putative MgpC-like protein MPN_464, found in Mycoplasma pneumoniae (strain ATCC 29342 / M129 / Subtype 1) (Mycoplasmoides pneumoniae).